The chain runs to 268 residues: GTP cyclohydrolase 1 type 2 homolog (268 aa).

Residues His-66, His-67, Asp-105, His-227, and Glu-231 each contribute to the a divalent metal cation site.

It belongs to the GTP cyclohydrolase I type 2/NIF3 family. Homohexamer.

In Clostridium acetobutylicum (strain ATCC 824 / DSM 792 / JCM 1419 / IAM 19013 / LMG 5710 / NBRC 13948 / NRRL B-527 / VKM B-1787 / 2291 / W), this protein is GTP cyclohydrolase 1 type 2 homolog.